Here is a 195-residue protein sequence, read N- to C-terminus: Shikimate kinase (195 aa).

Position 30 to 35 (30 to 35) interacts with ATP; it reads GAGKTA. Mg(2+) is bound at residue T34. Substrate contacts are provided by D52, R76, and G98. Residue R136 coordinates ATP. Substrate is bound at residue R155.

This sequence belongs to the shikimate kinase family. Monomer. Mg(2+) is required as a cofactor.

It localises to the cytoplasm. The enzyme catalyses shikimate + ATP = 3-phosphoshikimate + ADP + H(+). It participates in metabolic intermediate biosynthesis; chorismate biosynthesis; chorismate from D-erythrose 4-phosphate and phosphoenolpyruvate: step 5/7. In terms of biological role, catalyzes the specific phosphorylation of the 3-hydroxyl group of shikimic acid using ATP as a cosubstrate. The sequence is that of Shikimate kinase from Ruegeria pomeroyi (strain ATCC 700808 / DSM 15171 / DSS-3) (Silicibacter pomeroyi).